Consider the following 394-residue polypeptide: NAD(P)H-quinone oxidoreductase subunit H (394 aa).

It belongs to the complex I 49 kDa subunit family. NDH-1 can be composed of about 15 different subunits; different subcomplexes with different compositions have been identified which probably have different functions.

The protein localises to the cellular thylakoid membrane. It carries out the reaction a plastoquinone + NADH + (n+1) H(+)(in) = a plastoquinol + NAD(+) + n H(+)(out). The enzyme catalyses a plastoquinone + NADPH + (n+1) H(+)(in) = a plastoquinol + NADP(+) + n H(+)(out). NDH-1 shuttles electrons from an unknown electron donor, via FMN and iron-sulfur (Fe-S) centers, to quinones in the respiratory and/or the photosynthetic chain. The immediate electron acceptor for the enzyme in this species is believed to be plastoquinone. Couples the redox reaction to proton translocation, and thus conserves the redox energy in a proton gradient. Cyanobacterial NDH-1 also plays a role in inorganic carbon-concentration. This chain is NAD(P)H-quinone oxidoreductase subunit H, found in Synechococcus sp. (strain ATCC 27144 / PCC 6301 / SAUG 1402/1) (Anacystis nidulans).